A 564-amino-acid chain; its full sequence is Efflux pump hmp6 (564 aa).

Positions methionine 1–proline 25 are enriched in basic and acidic residues. Positions methionine 1–aspartate 46 are disordered. The next 8 membrane-spanning stretches (helical) occupy residues leucine 58–isoleucine 78, valine 96–tyrosine 118, isoleucine 125–proline 145, isoleucine 156–valine 176, glycine 186–phenylalanine 206, tryptophan 214–phenylalanine 234, phenylalanine 259–glycine 279, and isoleucine 289–phenylalanine 309. Asparagine 312 and asparagine 322 each carry an N-linked (GlcNAc...) asparagine glycan. 4 helical membrane-spanning segments follow: residues isoleucine 330–phenylalanine 350, serine 361–valine 383, alanine 395–serine 415, and isoleucine 452–alanine 472.

The protein belongs to the major facilitator superfamily. TCR/Tet family.

Its subcellular location is the cell membrane. Efflux pump that might be required for efficient secretion of hypothemycin or other secondary metabolies produced by the hypothemycin gene cluster. The sequence is that of Efflux pump hmp6 from Hypomyces subiculosus (Nectria subiculosa).